The sequence spans 212 residues: Glycerol-3-phosphate acyltransferase (212 aa).

Transmembrane regions (helical) follow at residues 3–23 (ILLA…VVVS), 78–98 (DVAV…PVFF), 115–135 (AVHP…AFFF), and 155–177 (FLFG…LLVW).

The protein belongs to the PlsY family. Probably interacts with PlsX.

It localises to the cell inner membrane. The catalysed reaction is an acyl phosphate + sn-glycerol 3-phosphate = a 1-acyl-sn-glycero-3-phosphate + phosphate. The protein operates within lipid metabolism; phospholipid metabolism. Catalyzes the transfer of an acyl group from acyl-phosphate (acyl-PO(4)) to glycerol-3-phosphate (G3P) to form lysophosphatidic acid (LPA). This enzyme utilizes acyl-phosphate as fatty acyl donor, but not acyl-CoA or acyl-ACP. This chain is Glycerol-3-phosphate acyltransferase, found in Burkholderia ambifaria (strain ATCC BAA-244 / DSM 16087 / CCUG 44356 / LMG 19182 / AMMD) (Burkholderia cepacia (strain AMMD)).